A 147-amino-acid chain; its full sequence is uncharacterized protein (147 aa).

The Rhodanese domain maps to 50-140 (NQKKAIIVDT…WNSENLPTTF (91 aa)).

This is an uncharacterized protein from Buchnera aphidicola subsp. Schizaphis graminum (strain Sg).